The sequence spans 392 residues: Elongation factor Tu-3 (392 aa).

Residues 10-206 form the tr-type G domain; it reads KPHLNIGTMG…AVDTYVPMPE (197 aa). Residues 19 to 26 are G1; it reads GHVDHGKT. 19-26 is a binding site for GTP; the sequence is GHVDHGKT. Thr26 contacts Mg(2+). Residues 63-67 form a G2 region; sequence GITIN. The segment at 84–87 is G3; it reads DMPG. Residues 84 to 88 and 139 to 142 contribute to the GTP site; these read DMPGH and NKAD. The tract at residues 139–142 is G4; sequence NKAD. Residues 176–178 are G5; that stretch reads SGL.

The protein belongs to the TRAFAC class translation factor GTPase superfamily. Classic translation factor GTPase family. EF-Tu/EF-1A subfamily. Monomer.

The protein localises to the cytoplasm. The catalysed reaction is GTP + H2O = GDP + phosphate + H(+). Its function is as follows. GTP hydrolase that promotes the GTP-dependent binding of aminoacyl-tRNA to the A-site of ribosomes during protein biosynthesis. The sequence is that of Elongation factor Tu-3 from Streptomyces coelicolor (strain ATCC BAA-471 / A3(2) / M145).